A 65-amino-acid chain; its full sequence is Alpha-toxin Bot1 (65 aa).

One can recognise an LCN-type CS-alpha/beta domain in the interval 2–64 (RDAYIAQPEN…VPIRIPGKCH (63 aa)). Intrachain disulfides connect Cys-12–Cys-63, Cys-16–Cys-36, Cys-22–Cys-46, and Cys-26–Cys-48. At Phe-65 the chain carries Phenylalanine amide.

Belongs to the long (4 C-C) scorpion toxin superfamily. Sodium channel inhibitor family. Alpha subfamily. Expressed by the venom gland.

Its subcellular location is the secreted. Functionally, alpha toxins bind voltage-independently at site-3 of sodium channels (Nav) and inhibit the inactivation of the activated channels, thereby blocking neuronal transmission. In Buthus occitanus tunetanus (Common European scorpion), this protein is Alpha-toxin Bot1.